Here is a 421-residue protein sequence, read N- to C-terminus: Trimethyllysine dioxygenase, mitochondrial (421 aa).

Residues 1–15 constitute a mitochondrion transit peptide; the sequence is MWCHRLSHLQSRLQD. Lys236 carries the N6-acetyllysine modification. 3 residues coordinate Fe cation: His242, Asp244, and His389.

This sequence belongs to the gamma-BBH/TMLD family. Homodimer. Requires Fe(2+) as cofactor. The cofactor is L-ascorbate.

It is found in the mitochondrion matrix. The catalysed reaction is N(6),N(6),N(6)-trimethyl-L-lysine + 2-oxoglutarate + O2 = (3S)-3-hydroxy-N(6),N(6),N(6)-trimethyl-L-lysine + succinate + CO2. The protein operates within amine and polyamine biosynthesis; carnitine biosynthesis. Functionally, converts trimethyllysine (TML) into hydroxytrimethyllysine (HTML). This Bos taurus (Bovine) protein is Trimethyllysine dioxygenase, mitochondrial (TMLHE).